The following is a 423-amino-acid chain: Serine--tRNA ligase (423 aa).

230–232 is an L-serine binding site; that stretch reads TSE. 261–263 lines the ATP pocket; the sequence is RSE. E284 provides a ligand contact to L-serine. 348–351 is a binding site for ATP; sequence EISS. S384 contacts L-serine.

Belongs to the class-II aminoacyl-tRNA synthetase family. Type-1 seryl-tRNA synthetase subfamily. As to quaternary structure, homodimer. The tRNA molecule binds across the dimer.

The protein localises to the cytoplasm. The enzyme catalyses tRNA(Ser) + L-serine + ATP = L-seryl-tRNA(Ser) + AMP + diphosphate + H(+). The catalysed reaction is tRNA(Sec) + L-serine + ATP = L-seryl-tRNA(Sec) + AMP + diphosphate + H(+). Its pathway is aminoacyl-tRNA biosynthesis; selenocysteinyl-tRNA(Sec) biosynthesis; L-seryl-tRNA(Sec) from L-serine and tRNA(Sec): step 1/1. In terms of biological role, catalyzes the attachment of serine to tRNA(Ser). Is also able to aminoacylate tRNA(Sec) with serine, to form the misacylated tRNA L-seryl-tRNA(Sec), which will be further converted into selenocysteinyl-tRNA(Sec). The protein is Serine--tRNA ligase of Macrococcus caseolyticus (strain JCSC5402) (Macrococcoides caseolyticum).